A 275-amino-acid chain; its full sequence is tRNA pseudouridine synthase A (275 aa).

D56 (nucleophile) is an active-site residue. Y114 contacts substrate.

Belongs to the tRNA pseudouridine synthase TruA family. As to quaternary structure, homodimer.

It catalyses the reaction uridine(38/39/40) in tRNA = pseudouridine(38/39/40) in tRNA. Formation of pseudouridine at positions 38, 39 and 40 in the anticodon stem and loop of transfer RNAs. The protein is tRNA pseudouridine synthase A of Polynucleobacter asymbioticus (strain DSM 18221 / CIP 109841 / QLW-P1DMWA-1) (Polynucleobacter necessarius subsp. asymbioticus).